A 586-amino-acid polypeptide reads, in one-letter code: MKKSYSGGTRTSSGRLRRLGDSSGPALKRSFEVEEVETPNSTPPRRVQTPLLRATVASSTQKFQDLGVKNSEPSARHVDSLSQRSPKASLRRVELSGPKAAEPVSRRTELSIDISSKQVENAGAIGPSRFGLKRAEVLGHKTPEPAPRRTEITIVKPQESAHRRMEPPASKVPEVPTAPATDAAPKRVEIQMPKPAEAPTAPSPAQTLENSEPAPVSQLQSRLEPKPQPPVAEATPRSQEATEAAPSCVGDMADTPRDAGLKQAPASRNEKAPVDFGYVGIDSILEQMRRKAMKQGFEFNIMVVGQSGLGKSTLINTLFKSKISRKSVQPTSEERIPKTIEIKSITHDIEEKGVRMKLTVIDTPGFGDHINNENCWQPIMKFINDQYEKYLQEEVNINRKKRIPDTRVHCCLYFIPATGHSLRPLDIEFMKRLSKVVNIVPVIAKADTLTLEERVHFKQRITADLLSNGIDVYPQKEFDEDSEDRLVNEKFREMIPFAVVGSDHEYQVNGKRILGRKTKWGTIEVENTTHCEFAYLRDLLIRTHMQNIKDITSSIHFEAYRVKRLNEGSSAMANGMEEKEPEAPEM.

Met-1 carries the N-acetylmethionine modification. Low complexity predominate over residues 1-14 (MKKSYSGGTRTSSG). 3 disordered regions span residues 1 to 49 (MKKS…RVQT), 62 to 108 (KFQD…SRRT), and 134 to 268 (RAEV…PASR). Phosphoserine is present on residues Ser-22 and Ser-30. Phosphothreonine is present on residues Thr-38, Thr-42, and Thr-49. Lys-62 carries the post-translational modification N6-acetyllysine. Ser-82, Ser-85, Ser-89, and Ser-96 each carry phosphoserine. Residues 134–151 (RAEVLGHKTPEPAPRRTE) show a composition bias toward basic and acidic residues. Phosphothreonine is present on Thr-142. Tyr-278 is subject to Phosphotyrosine. Positions 295 to 567 (QGFEFNIMVV…EAYRVKRLNE (273 aa)) constitute a Septin-type G domain. A G1 motif region spans residues 305 to 312 (GQSGLGKS). Residue 305–312 (GQSGLGKS) coordinates GTP. Residues Ser-327 and Ser-332 each carry the phosphoserine modification. GTP contacts are provided by residues Thr-339, Gly-365, 445 to 453 (KADTLTLEE), Gly-501, and Arg-516. The segment at 362–365 (DTPG) is G3 motif. Residues 444–447 (AKAD) form a G4 motif region.

This sequence belongs to the TRAFAC class TrmE-Era-EngA-EngB-Septin-like GTPase superfamily. Septin GTPase family. Septins polymerize into heterooligomeric protein complexes that form filaments, and associate with cellular membranes, actin filaments, and microtubules. GTPase activity is required for filament formation. Interacts with SEPTIN2, SEPTIN6, SEPTIN7, SEPTIN11 and SEPTIN14. Interacts with RTKN and ARHGEF18. In a mesenchymal cell line, Rho/RTKN signals cause disruption of wild-type septin filaments, but not of those containing isoform 2 variants HNA Trp-106 and Phe-111. In a mesenchymal cell line, isoform 2 variants HNA Trp-106 and Phe-111, but not wild type, form filaments with SEPTIN4. In terms of tissue distribution, widely expressed. Isoforms are differentially expressed in testes, kidney, liver heart, spleen, brain, peripheral blood leukocytes, skeletal muscle and kidney. Specific isoforms appear to demonstrate tissue specificity. Isoform 5 is the most highly expressed in fetal tissue. Isoform 1 is detected in all tissues except the brain and thymus, while isoform 2, isoform 3, and isoform 4 are detected at low levels in approximately half of the fetal tissues.

It is found in the cytoplasm. The protein resides in the cytoskeleton. Functionally, filament-forming cytoskeletal GTPase. May play a role in cytokinesis (Potential). May play a role in the internalization of 2 intracellular microbial pathogens, Listeria monocytogenes and Shigella flexneri. This is Septin-9 from Homo sapiens (Human).